The chain runs to 382 residues: tRNA-specific 2-thiouridylase MnmA (382 aa).

ATP contacts are provided by residues A18–S25 and L44. The active-site Nucleophile is C112. C112 and C209 are joined by a disulfide. G136 contacts ATP. The segment at R159–Q161 is interaction with tRNA. Residue C209 is the Cysteine persulfide intermediate of the active site.

This sequence belongs to the MnmA/TRMU family.

The protein localises to the cytoplasm. It carries out the reaction S-sulfanyl-L-cysteinyl-[protein] + uridine(34) in tRNA + AH2 + ATP = 2-thiouridine(34) in tRNA + L-cysteinyl-[protein] + A + AMP + diphosphate + H(+). Its function is as follows. Catalyzes the 2-thiolation of uridine at the wobble position (U34) of tRNA, leading to the formation of s(2)U34. The polypeptide is tRNA-specific 2-thiouridylase MnmA (Methylobacterium sp. (strain 4-46)).